A 186-amino-acid chain; its full sequence is Lipid A palmitoyltransferase PagP (186 aa).

Positions 1 to 25 are cleaved as a signal peptide; it reads MNVSKYVAIFSFVFIQLISVGKVFA. Catalysis depends on residues His58, Asp101, and Ser102.

It belongs to the lipid A palmitoyltransferase family. As to quaternary structure, homodimer.

Its subcellular location is the cell outer membrane. The enzyme catalyses lipid A (E. coli) + a 1-hexadecanoyl-2-acyl-sn-glycero-3-phosphocholine = hepta-acyl lipid A (E. coli) + a 2-acyl-sn-glycero-3-phosphocholine. It carries out the reaction lipid IIA + a 1-hexadecanoyl-2-acyl-sn-glycero-3-phosphocholine = lipid IIB + a 2-acyl-sn-glycero-3-phosphocholine. The catalysed reaction is lipid IVA (E. coli) + a 1-hexadecanoyl-2-acyl-sn-glycero-3-phosphocholine = lipid IVB (E. coli) + a 2-acyl-sn-glycero-3-phosphocholine. With respect to regulation, inhibited by lauryldimethylamine oxide (LDAO) and dodecylphosphocholine (DPC). Its function is as follows. Transfers a palmitate residue from the sn-1 position of a phospholipid to the N-linked hydroxymyristate on the proximal unit of lipid A or its precursors. Phosphatidylglycerol (PtdGro), phosphatidylethanolamine (PtdEtn), phosphatidylserine (PtdSer) and phosphatidic acid (Ptd-OH) are all effective acyl donors. This chain is Lipid A palmitoyltransferase PagP, found in Escherichia coli (strain K12).